The primary structure comprises 83 residues: UPF0346 protein M28_Spy0369 (83 aa).

This sequence belongs to the UPF0346 family.

The sequence is that of UPF0346 protein M28_Spy0369 from Streptococcus pyogenes serotype M28 (strain MGAS6180).